We begin with the raw amino-acid sequence, 214 residues long: A-type ATP synthase subunit D (214 aa).

This sequence belongs to the V-ATPase D subunit family. In terms of assembly, has multiple subunits with at least A(3), B(3), C, D, E, F, H, I and proteolipid K(x).

The protein resides in the cell membrane. Functionally, component of the A-type ATP synthase that produces ATP from ADP in the presence of a proton gradient across the membrane. The protein is A-type ATP synthase subunit D of Pyrococcus abyssi (strain GE5 / Orsay).